Here is a 201-residue protein sequence, read N- to C-terminus: Chromophore lyase CpcT/CpeT (201 aa).

It belongs to the CpcT/CpeT biliprotein lyase family.

It localises to the plastid. It is found in the organellar chromatophore. Functionally, covalently attaches a chromophore to Cys residue(s) of phycobiliproteins. The protein is Chromophore lyase CpcT/CpeT of Paulinella chromatophora.